The chain runs to 203 residues: SOSS complex subunit B1 (203 aa).

A DNA-binding region (OB) is located at residues 22-92 (IVLETGRVTK…TLYTGRGGDL (71 aa)). The tract at residues 111–203 (PNPEYIAQQS…GKEPRRTGKR (93 aa)) is disordered. Positions 117–128 (AQQSQNKQAQAE) are enriched in polar residues. The segment covering 129–140 (SGTGTNSHNSSS) has biased composition (low complexity). Residues 149–182 (ENGNGSNSSGPPTHQSTAPTHSTSGRITRSQPNH) show a composition bias toward polar residues.

The protein belongs to the SOSS-B family. SOSS-B1 subfamily. Component of the SOSS complex, composed of soss-b (soss-b1/nabp2 or soss-b2/nabp1), soss-a/ints3 and soss-c/inip. SOSS complexes containing soss-b1/nabp2 are more abundant than complexes containing soss-b2/nabp1.

The protein localises to the nucleus. Component of the SOSS complex, a multiprotein complex that functions downstream of the MRN complex to promote DNA repair and G2/M checkpoint. In the SOSS complex, acts as a sensor of single-stranded DNA that binds to single-stranded DNA. The SOSS complex associates with DNA lesions and influences diverse endpoints in the cellular DNA damage response including cell-cycle checkpoint activation, recombinational repair and maintenance of genomic stability. Required for efficient homologous recombination-dependent repair of double-strand breaks (DSBs). This chain is SOSS complex subunit B1 (nabp2), found in Xenopus tropicalis (Western clawed frog).